The primary structure comprises 369 residues: uncharacterized protein (369 aa).

Residues M1–N35 are disordered. Residues Q17–H27 show a composition bias toward basic and acidic residues. WD repeat units follow at residues G83–T127, G130–L169, G174–L213, G220–T260, E263–I301, and G304–E341.

This is an uncharacterized protein from Schizosaccharomyces pombe (strain 972 / ATCC 24843) (Fission yeast).